Here is a 37-residue protein sequence, read N- to C-terminus: Large ribosomal subunit protein bL36c (37 aa).

This sequence belongs to the bacterial ribosomal protein bL36 family.

It is found in the plastid. The protein is Large ribosomal subunit protein bL36c of Helicosporidium sp. subsp. Simulium jonesii (Green alga).